The following is a 389-amino-acid chain: Probable zinc transporter zip2 (389 aa).

A run of 7 helical transmembrane segments spans residues 6–26 (GWILSLSINAFCVFGASGIYL), 48–68 (LVTGLATSSGILLYSSWASVM), 88–108 (VFQFCAFFFGGIVFYIFNHFL), 267–289 (VLVAMSIHNIVEGFTIAYPLYLA), 305–325 (SCSLPLGSLIAFLVMEAGGIG), 329–349 (FLNFLYGIIFAGTAGMMLILS), and 368–388 (HSFICFTIGILFTLFLEIFDS).

Belongs to the ZIP transporter (TC 2.A.5) family.

It is found in the endoplasmic reticulum membrane. Probable zinc transporter that may mediate zinc remobilization from the endoplasmic reticulum under zinc limitation. The chain is Probable zinc transporter zip2 (zip2) from Schizosaccharomyces pombe (strain 972 / ATCC 24843) (Fission yeast).